Reading from the N-terminus, the 430-residue chain is Tol-Pal system protein TolB (430 aa).

A signal peptide spans 1–21 (MKQALRVAFGFLILWASVLHA).

It belongs to the TolB family. In terms of assembly, the Tol-Pal system is composed of five core proteins: the inner membrane proteins TolA, TolQ and TolR, the periplasmic protein TolB and the outer membrane protein Pal. They form a network linking the inner and outer membranes and the peptidoglycan layer.

The protein localises to the periplasm. Functionally, part of the Tol-Pal system, which plays a role in outer membrane invagination during cell division and is important for maintaining outer membrane integrity. TolB occupies a key intermediary position in the Tol-Pal system because it communicates directly with both membrane-embedded components, Pal in the outer membrane and TolA in the inner membrane. The protein is Tol-Pal system protein TolB of Shigella flexneri.